Here is an 80-residue protein sequence, read N- to C-terminus: CLAVATA3/ESR (CLE)-related protein 40 (80 aa).

A signal peptide spans 1 to 25; the sequence is MAAMKYKGSVFIILVILLLSSSLLA. The segment at 45–80 is disordered; sequence MKKEKKIDGGTANEVEERQVPTGSDPLHHKHIPFTP. The residue at position 65 (proline 65) is a Hydroxyproline.

The protein belongs to the CLV3/ESR signal peptide family. Mostly expressed at low levels in stems and apex, and, to a lower extent, in roots, seedlings, leaves, flowers, siliques and pollen.

It is found in the secreted. It localises to the extracellular space. Extracellular signal peptide secreted by differentiated root cells that regulates root cell fate. Acts with ACR4 as a ligand-receptor pair in a signal transduction pathway, coordinating movement of the root tip and organization of cell divisions in the root meristem. Promotes cell differentiation in the distal root meristem in a dose-dependent manner, especially the transition from columella stem cells (CSC) daughters into columella cells (CCs). Induces ACR4 expression in root quiescent center (QC). Involved in WUX5 QC-specific expression pattern regulation. Regulates the transition of protophloem cells from proliferation to differentiation, thus impinging on postembryonic growth capacity of the root meristem; this signaling pathway requires CRN and CLV2. This Arabidopsis thaliana (Mouse-ear cress) protein is CLAVATA3/ESR (CLE)-related protein 40.